The sequence spans 513 residues: TRAF3-interacting JNK-activating modulator (513 aa).

Disordered stretches follow at residues 1 to 96 (MISS…GQVS), 130 to 171 (SSGI…KAEE), and 381 to 402 (SLQG…QLKK). Residues 1-485 (MISSDSRSSP…QLQVKENELQ (485 aa)) are Cytoplasmic-facing. Basic and acidic residues-rich tracts occupy residues 17-31 (ESYE…ETRE) and 69-79 (RNLEEEKKGQA). Residues 266–488 (MKKVLLEMED…VKENELQCGQ (223 aa)) are a coiled coil. A compositionally biased stretch (polar residues) spans 386–397 (GEQQSSETQDLQ). The helical; Anchor for type IV membrane protein transmembrane segment at 486–506 (CGQWLPVLMVVIATALAVFLA) threads the bilayer. The Extracellular portion of the chain corresponds to 507-513 (NKGNLVI).

As to quaternary structure, interacts (via its coiled-coil domain) with TRAF3 (via isoleucine zipper). Interacts with MAP2K1. Interacts with PPP2CA; this interaction targets PPP2CA to the lysosomes. Interacts with MAVS. Interacts with TBK1. As to expression, expressed in bone marrow, spleen and thymus. Not detected in heart, kidney and liver.

The protein localises to the cell membrane. Its subcellular location is the golgi apparatus membrane. The protein resides in the lysosome membrane. It localises to the mitochondrion outer membrane. Functionally, adapter protein that plays essential roles in both innate and adaptive immunity. Plays a crucial role in the regulation of thymocyte development. Mechanistically, mediates TCR-stimulated activation through recruiting MAP2K1/MEK1 to the Golgi and, thereby, facilitating the interaction of MAP2K1/MEK1 with its activator BRAF. Also plays an essential role in regulatory T-cell stability and function by recruiting the serine-threonine phosphatase catalytic subunit (PPP2CA) to the lysosome, thereby facilitating the interaction of PP2Ac with the mTORC1 component RPTOR and restricting glycolytic metabolism. Positively regulates TLR4 signaling activity in macrophage-mediated inflammation by acting as a molecular clamp to facilitate LPS-induced translocation of TLR4 to lipid rafts. In response to viral infection, facilitates the recruitment of TRAF3 to MAVS within mitochondria leading to IRF3 activation and interferon production. However, participates in the maintenance of immune homeostasis and the prevention of overzealous innate immunity by promoting 'Lys-48'-dependent ubiquitination of TBK1. The chain is TRAF3-interacting JNK-activating modulator (Traf3ip3) from Mus musculus (Mouse).